Consider the following 344-residue polypeptide: HTH-type transcriptional regulator XC_2801 (344 aa).

Residues 3 to 60 (HDLNDTLIFVKVVEQGSFIAAANSLGLPKTTVSRKVQELETRLGARLLHRTTRRIGLT) enclose the HTH lysR-type domain. Residues 20–39 (FIAAANSLGLPKTTVSRKVQ) constitute a DNA-binding region (H-T-H motif).

Belongs to the LysR transcriptional regulatory family. In terms of assembly, interacts with the cyclic di-GMP effector XC_3703.

Its activity is regulated as follows. Activity is regulated by cyclic di-GMP. Cyclic di-GMP specifically binds to XC_3703, which inhibits the interaction of the XC_2801-XC_3703 complex with DNA and prevents the transcription of the target genes. Transcriptional regulator that directly or indirectly regulates the expression of virulence-related genes, including flhB, aaeA, fliL and flgG. Binds to the promoter of the target genes only in the presence of XC_3703. This chain is HTH-type transcriptional regulator XC_2801, found in Xanthomonas campestris pv. campestris (strain 8004).